A 149-amino-acid polypeptide reads, in one-letter code: Large ribosomal subunit protein bL9 (149 aa).

The protein belongs to the bacterial ribosomal protein bL9 family.

In terms of biological role, binds to the 23S rRNA. The polypeptide is Large ribosomal subunit protein bL9 (Xanthomonas axonopodis pv. citri (strain 306)).